A 304-amino-acid polypeptide reads, in one-letter code: tRNA dimethylallyltransferase (304 aa).

An ATP-binding site is contributed by 10-17; sequence GPTASGKT. 12–17 lines the substrate pocket; that stretch reads TASGKT. Interaction with substrate tRNA stretches follow at residues 35 to 38, 159 to 163, and 240 to 245; these read DSAL, QRLSR, and RCVGYR.

The protein belongs to the IPP transferase family. As to quaternary structure, monomer. Mg(2+) is required as a cofactor.

It carries out the reaction adenosine(37) in tRNA + dimethylallyl diphosphate = N(6)-dimethylallyladenosine(37) in tRNA + diphosphate. Functionally, catalyzes the transfer of a dimethylallyl group onto the adenine at position 37 in tRNAs that read codons beginning with uridine, leading to the formation of N6-(dimethylallyl)adenosine (i(6)A). The polypeptide is tRNA dimethylallyltransferase (Shewanella putrefaciens (strain CN-32 / ATCC BAA-453)).